Consider the following 359-residue polypeptide: MWCMRRLPTNSVMTVARKRKQTTIEDFFGTKKSTNEAPNKKGKSGATFMTITNGAAIKTETKAVAKEANTDKYPANSNAKDVYSKNLSSNLRTLLSLELETIDDSWFPHLMDEFKKPYFVKLKQFVTKEQADHTVFPPAKDIYSWTRLTPFNKVKVVIIGQDPYHNFNQAHGLAFSVKPPTPAPPSLKNIYKELKQEYPDFVEDNKVGDLTHWASQGVLLLNTSLTVRAHNANSHSKHGWETFTKRVVQLLIQDREADGKSLVFLLWGNNAIKLVESLLGSTSVGSGSKYPNIMVMKSVHPSPLSASRGFFGTNHFKMINDWLYNTRGEKMIDWSVVPGTSLREVQEANARLESESKDP.

A mitochondrion-targeting transit peptide spans 1-21 (MWCMRRLPTNSVMTVARKRKQ). Asp-162 (proton acceptor) is an active-site residue.

Belongs to the uracil-DNA glycosylase (UDG) superfamily. UNG family.

The protein resides in the mitochondrion. Its subcellular location is the nucleus. The catalysed reaction is Hydrolyzes single-stranded DNA or mismatched double-stranded DNA and polynucleotides, releasing free uracil.. Functionally, excises uracil residues from the DNA which can arise as a result of misincorporation of dUMP residues by DNA polymerase or due to deamination of cytosine. Not involved in strand-directed mismatch repair. The protein is Uracil-DNA glycosylase of Saccharomyces cerevisiae (strain ATCC 204508 / S288c) (Baker's yeast).